Consider the following 353-residue polypeptide: Inactive metacaspase-4 (353 aa).

Gly-2 carries N-myristoyl glycine lipidation.

It belongs to the peptidase C14B family. In terms of processing, palmitoylated. Post-translationally, proteolytic cleavage by MCA3 occurs prior or during secretion and requires MCA4 membrane localization. Cleavage is dispensable for secretion and parasite growth and virulence in the mammalian host. In vitro, can be cleaved by MCA2 but specifically cleaved by MCA3 in vivo.

The protein resides in the cell projection. It localises to the cilium. It is found in the flagellum membrane. Its subcellular location is the secreted. Functionally, inactive metacaspase which plays a role in parasite bloodstream form growth and in parasite virulence within the mammalian host. The sequence is that of Inactive metacaspase-4 from Trypanosoma brucei brucei.